The sequence spans 387 residues: Phosphoglycerate kinase (387 aa).

Substrate-binding positions include Asp21–Asn23, Arg36, and His59–Arg62. Lys84 is subject to N6-acetyllysine. Residues Arg113 and Arg146 each coordinate substrate. ATP is bound by residues Lys197, Glu314, and Gly340–Thr343.

Belongs to the phosphoglycerate kinase family. Monomer.

It localises to the cytoplasm. The enzyme catalyses (2R)-3-phosphoglycerate + ATP = (2R)-3-phospho-glyceroyl phosphate + ADP. It functions in the pathway carbohydrate degradation; glycolysis; pyruvate from D-glyceraldehyde 3-phosphate: step 2/5. This is Phosphoglycerate kinase from Escherichia coli O9:H4 (strain HS).